Reading from the N-terminus, the 236-residue chain is Purine nucleoside phosphorylase DeoD-type 2 (236 aa).

A purine D-ribonucleoside is bound at residue His-5. Residues Gly-21, Arg-25, Arg-44, and 88 to 91 each bind phosphate; that span reads RVGS. A purine D-ribonucleoside is bound by residues 180-182 and 204-205; these read DME and SD. The active-site Proton donor is the Asp-205.

It belongs to the PNP/UDP phosphorylase family. Homohexamer; trimer of homodimers.

The catalysed reaction is a purine D-ribonucleoside + phosphate = a purine nucleobase + alpha-D-ribose 1-phosphate. The enzyme catalyses a purine 2'-deoxy-D-ribonucleoside + phosphate = a purine nucleobase + 2-deoxy-alpha-D-ribose 1-phosphate. Catalyzes the reversible phosphorolytic breakdown of the N-glycosidic bond in the beta-(deoxy)ribonucleoside molecules, with the formation of the corresponding free purine bases and pentose-1-phosphate. In Vibrio vulnificus (strain CMCP6), this protein is Purine nucleoside phosphorylase DeoD-type 2.